Consider the following 225-residue polypeptide: 2-C-methyl-D-erythritol 4-phosphate cytidylyltransferase (225 aa).

This sequence belongs to the IspD/TarI cytidylyltransferase family. IspD subfamily.

It catalyses the reaction 2-C-methyl-D-erythritol 4-phosphate + CTP + H(+) = 4-CDP-2-C-methyl-D-erythritol + diphosphate. It participates in isoprenoid biosynthesis; isopentenyl diphosphate biosynthesis via DXP pathway; isopentenyl diphosphate from 1-deoxy-D-xylulose 5-phosphate: step 2/6. Functionally, catalyzes the formation of 4-diphosphocytidyl-2-C-methyl-D-erythritol from CTP and 2-C-methyl-D-erythritol 4-phosphate (MEP). The chain is 2-C-methyl-D-erythritol 4-phosphate cytidylyltransferase from Haemophilus influenzae (strain 86-028NP).